The sequence spans 440 residues: Coenzyme A disulfide reductase (440 aa).

FAD is bound at residue 8–33 (GAVAGGATCASQIRRLDKDSEITIFE). Positions 15, 19, 22, 39, and 42 each coordinate substrate. Residue cysteine 43 is the Nucleophile of the active site. Catalysis depends on cysteine 43, which acts as the Redox-active. Lysine 71 provides a ligand contact to substrate. 151 to 166 (ALVVGAGYISLEVLEN) provides a ligand contact to NADP(+). 267–277 (TNIPNIYALGD) lines the FAD pocket. Histidine 299 contacts substrate. Tyrosine 419 is an FAD binding site. A substrate-binding site is contributed by lysine 427.

The protein belongs to the class-III pyridine nucleotide-disulfide oxidoreductase family. Homodimer. It depends on FAD as a cofactor.

It catalyses the reaction NADP(+) + 2 CoA = CoA-disulfide + NADPH + H(+). Functionally, catalyzes specifically the NADPH-dependent reduction of coenzyme A disulfide. The sequence is that of Coenzyme A disulfide reductase from Staphylococcus haemolyticus (strain JCSC1435).